Here is a 144-residue protein sequence, read N- to C-terminus: MIGLIQRVKWAKVEVDNQTVGEISMGLLVLLGVEQGDDQAKADRLLEKVLNYRVFADEQGKMNLNVQQAGGSLLVVSQFTLAADTQKGLRPSFSRGATPALAQALYDYFHQQAALKIHTQTGRFAADMQVSLQNDGPVTFWLQV.

The Gly-cisPro motif, important for rejection of L-amino acids motif lies at 136-137 (GP).

It belongs to the DTD family. As to quaternary structure, homodimer.

Its subcellular location is the cytoplasm. It catalyses the reaction glycyl-tRNA(Ala) + H2O = tRNA(Ala) + glycine + H(+). The enzyme catalyses a D-aminoacyl-tRNA + H2O = a tRNA + a D-alpha-amino acid + H(+). In terms of biological role, an aminoacyl-tRNA editing enzyme that deacylates mischarged D-aminoacyl-tRNAs. Also deacylates mischarged glycyl-tRNA(Ala), protecting cells against glycine mischarging by AlaRS. Acts via tRNA-based rather than protein-based catalysis; rejects L-amino acids rather than detecting D-amino acids in the active site. By recycling D-aminoacyl-tRNA to D-amino acids and free tRNA molecules, this enzyme counteracts the toxicity associated with the formation of D-aminoacyl-tRNA entities in vivo and helps enforce protein L-homochirality. In Glaesserella parasuis serovar 5 (strain SH0165) (Haemophilus parasuis), this protein is D-aminoacyl-tRNA deacylase.